Consider the following 105-residue polypeptide: Immunoglobulin lambda-like polypeptide 1 (105 aa).

A c region region spans residues 1–105 (QPKSDPLVTL…EKSVSPAECS (105 aa)). The Ig-like C1-type domain occupies 6–100 (PLVTLFLPSL…EGNTVEKSVS (95 aa)). C27 and C86 are disulfide-bonded.

In terms of assembly, associates non-covalently with VPREB1A. Interacts with SYNV1/HRD1 (via N-terminus); this interaction leads to increased IGLL1 ubiquitination and degradation in pre-B cells, possibly through a lysosomal, not proteasomal, pathway.

The protein resides in the endoplasmic reticulum. It localises to the secreted. Functionally, critical for B-cell development. The chain is Immunoglobulin lambda-like polypeptide 1 (Igll1) from Mus spretus (Western Mediterranean mouse).